The sequence spans 119 residues: Phosphoribosyl-AMP cyclohydrolase (119 aa).

Asp77 serves as a coordination point for Mg(2+). Zn(2+) is bound at residue Cys78. Residues Asp79 and Asp81 each coordinate Mg(2+). Residues Cys94 and Cys101 each contribute to the Zn(2+) site.

Belongs to the PRA-CH family. Homodimer. Mg(2+) is required as a cofactor. The cofactor is Zn(2+).

It is found in the cytoplasm. It catalyses the reaction 1-(5-phospho-beta-D-ribosyl)-5'-AMP + H2O = 1-(5-phospho-beta-D-ribosyl)-5-[(5-phospho-beta-D-ribosylamino)methylideneamino]imidazole-4-carboxamide. The protein operates within amino-acid biosynthesis; L-histidine biosynthesis; L-histidine from 5-phospho-alpha-D-ribose 1-diphosphate: step 3/9. Functionally, catalyzes the hydrolysis of the adenine ring of phosphoribosyl-AMP. This Cereibacter sphaeroides (strain ATCC 17023 / DSM 158 / JCM 6121 / CCUG 31486 / LMG 2827 / NBRC 12203 / NCIMB 8253 / ATH 2.4.1.) (Rhodobacter sphaeroides) protein is Phosphoribosyl-AMP cyclohydrolase.